The following is a 257-amino-acid chain: Cytosolic Fe-S cluster assembly factor NUBP2 homolog (257 aa).

ATP is bound at residue 14–21 (GKGGVGKS). The [4Fe-4S] cluster site is built by Cys-188 and Cys-191.

This sequence belongs to the Mrp/NBP35 ATP-binding proteins family. NUBP2/CFD1 subfamily. Heterotetramer of 2 NUBP1 and 2 NUBP2 chains. The cofactor is [4Fe-4S] cluster.

It is found in the cytoplasm. Functionally, component of the cytosolic iron-sulfur (Fe/S) protein assembly (CIA) machinery. Required for maturation of extramitochondrial Fe-S proteins. The NUBP1-NUBP2 heterotetramer forms a Fe-S scaffold complex, mediating the de novo assembly of an Fe-S cluster and its transfer to target apoproteins. In Culex quinquefasciatus (Southern house mosquito), this protein is Cytosolic Fe-S cluster assembly factor NUBP2 homolog.